Here is a 314-residue protein sequence, read N- to C-terminus: Methionyl-tRNA formyltransferase (314 aa).

(6S)-5,6,7,8-tetrahydrofolate is bound at residue 113–116 (SLLP).

The protein belongs to the Fmt family.

The catalysed reaction is L-methionyl-tRNA(fMet) + (6R)-10-formyltetrahydrofolate = N-formyl-L-methionyl-tRNA(fMet) + (6S)-5,6,7,8-tetrahydrofolate + H(+). Its function is as follows. Attaches a formyl group to the free amino group of methionyl-tRNA(fMet). The formyl group appears to play a dual role in the initiator identity of N-formylmethionyl-tRNA by promoting its recognition by IF2 and preventing the misappropriation of this tRNA by the elongation apparatus. In Pseudomonas savastanoi pv. phaseolicola (strain 1448A / Race 6) (Pseudomonas syringae pv. phaseolicola (strain 1448A / Race 6)), this protein is Methionyl-tRNA formyltransferase.